We begin with the raw amino-acid sequence, 419 residues long: Gamma-glutamyl phosphate reductase (419 aa).

This sequence belongs to the gamma-glutamyl phosphate reductase family.

It localises to the cytoplasm. The catalysed reaction is L-glutamate 5-semialdehyde + phosphate + NADP(+) = L-glutamyl 5-phosphate + NADPH + H(+). Its pathway is amino-acid biosynthesis; L-proline biosynthesis; L-glutamate 5-semialdehyde from L-glutamate: step 2/2. Catalyzes the NADPH-dependent reduction of L-glutamate 5-phosphate into L-glutamate 5-semialdehyde and phosphate. The product spontaneously undergoes cyclization to form 1-pyrroline-5-carboxylate. The protein is Gamma-glutamyl phosphate reductase of Caldicellulosiruptor saccharolyticus (strain ATCC 43494 / DSM 8903 / Tp8T 6331).